The following is a 109-amino-acid chain: Hainantoxin-XVIII-2 (109 aa).

Residues 1 to 18 (MKLSIIIIATSLVIAVVA) form the signal peptide. A propeptide spanning residues 19–46 (FPSKDSKAIENDKTEQRMEIVVQETARA) is cleaved from the precursor. Intrachain disulfides connect cysteine 47-cysteine 62, cysteine 59-cysteine 108, and cysteine 61-cysteine 81.

The protein belongs to the neurotoxin 25 family. F7 subfamily. As to expression, expressed by the venom gland.

It localises to the secreted. Putative ion channel inhibitor. The polypeptide is Hainantoxin-XVIII-2 (Cyriopagopus hainanus (Chinese bird spider)).